Here is a 311-residue protein sequence, read N- to C-terminus: 4-diphosphocytidyl-2-C-methyl-D-erythritol kinase (311 aa).

Residue K10 is part of the active site. An ATP-binding site is contributed by P105–A115. D146 is an active-site residue.

This sequence belongs to the GHMP kinase family. IspE subfamily.

It carries out the reaction 4-CDP-2-C-methyl-D-erythritol + ATP = 4-CDP-2-C-methyl-D-erythritol 2-phosphate + ADP + H(+). It functions in the pathway isoprenoid biosynthesis; isopentenyl diphosphate biosynthesis via DXP pathway; isopentenyl diphosphate from 1-deoxy-D-xylulose 5-phosphate: step 3/6. Its function is as follows. Catalyzes the phosphorylation of the position 2 hydroxy group of 4-diphosphocytidyl-2C-methyl-D-erythritol. The chain is 4-diphosphocytidyl-2-C-methyl-D-erythritol kinase from Corynebacterium glutamicum (strain ATCC 13032 / DSM 20300 / JCM 1318 / BCRC 11384 / CCUG 27702 / LMG 3730 / NBRC 12168 / NCIMB 10025 / NRRL B-2784 / 534).